The sequence spans 275 residues: Shikimate dehydrogenase (NADP(+)) (275 aa).

Shikimate is bound by residues 19–21 and Thr66; that span reads SIS. Lys70 acts as the Proton acceptor in catalysis. Position 82 (Glu82) interacts with NADP(+). Residues Asn91 and Asp106 each contribute to the shikimate site. NADP(+) is bound by residues 129–133, 153–158, and Ile219; these read GAGGA and NRTYER. Tyr221 contacts shikimate. Residue Gly242 coordinates NADP(+).

It belongs to the shikimate dehydrogenase family. Homodimer.

The catalysed reaction is shikimate + NADP(+) = 3-dehydroshikimate + NADPH + H(+). It functions in the pathway metabolic intermediate biosynthesis; chorismate biosynthesis; chorismate from D-erythrose 4-phosphate and phosphoenolpyruvate: step 4/7. In terms of biological role, involved in the biosynthesis of the chorismate, which leads to the biosynthesis of aromatic amino acids. Catalyzes the reversible NADPH linked reduction of 3-dehydroshikimate (DHSA) to yield shikimate (SA). The sequence is that of Shikimate dehydrogenase (NADP(+)) from Dictyoglomus turgidum (strain DSM 6724 / Z-1310).